The following is an 82-amino-acid chain: MKIIALLLMVFLDFIIVNXAEQNEKKRRDNLGIPGAGDTEDANQAYKIAQDLQYKNSDSSPGKRSIMLSKLKNNAKRQFSEN.

An N-terminal signal peptide occupies residues 1–21; the sequence is MKIIALLLMVFLDFIIVNXAE.

It belongs to the scoloptoxin-21 family. Expressed by the venom gland.

It localises to the secreted. The polypeptide is U-scoloptoxin(21)-Sm3a (Scolopendra morsitans (Tanzanian blue ringleg centipede)).